We begin with the raw amino-acid sequence, 506 residues long: Maturase K (506 aa).

This sequence belongs to the intron maturase 2 family. MatK subfamily.

The protein localises to the plastid. The protein resides in the chloroplast. In terms of biological role, usually encoded in the trnK tRNA gene intron. Probably assists in splicing its own and other chloroplast group II introns. This Melilotus albus (White sweet clover) protein is Maturase K.